Reading from the N-terminus, the 283-residue chain is Gap junction beta-1 protein (283 aa).

At 1–22 the chain is on the cytoplasmic side; sequence MNWTGLYTLLSGVNRHSTAIGR. Residues 23 to 45 form a helical membrane-spanning segment; it reads VWLSVIFIFRIMVLVVAAESVWG. The Extracellular portion of the chain corresponds to 46-75; the sequence is DEKSSFICNTLQPGCNSVCYDHFFPISHVR. Residues 76–95 traverse the membrane as a helical segment; sequence LWSLQLILVSTPALLVAMHV. Residues 96 to 130 lie on the Cytoplasmic side of the membrane; it reads AHQQHIEKKMLRLEGHGDPLHLEEVKRHKVHISGT. The chain crosses the membrane as a helical span at residues 131–153; sequence LWWTYVISVVFRLLFEAVFMYVF. Topologically, residues 154–191 are extracellular; sequence YLLYPGYAMVRLVKCEAFPCPNTVDCFVSRPTEKTVFT. Residues 192-214 traverse the membrane as a helical segment; it reads VFMLAASGICIILNVAEVVYLII. The Cytoplasmic segment spans residues 215 to 283; that stretch reads RACARRAQRR…AEKSDRCSAC (69 aa). A phosphoserine mark is found at serine 233, serine 258, serine 266, and serine 277.

It belongs to the connexin family. Beta-type (group I) subfamily. A connexon is composed of a hexamer of connexins. Interacts with CNST.

Its subcellular location is the cell membrane. The protein localises to the cell junction. The protein resides in the gap junction. In terms of biological role, one gap junction consists of a cluster of closely packed pairs of transmembrane channels, the connexons, through which materials of low MW diffuse from one cell to a neighboring cell. This chain is Gap junction beta-1 protein (Gjb1), found in Mus musculus (Mouse).